The following is a 363-amino-acid chain: Chorismate synthase (363 aa).

Positions 48 and 54 each coordinate NADP(+). FMN is bound by residues 125 to 127 (RSS), 237 to 238 (NA), Gly277, 292 to 296 (KPTSS), and Arg318.

It belongs to the chorismate synthase family. As to quaternary structure, homotetramer. FMNH2 serves as cofactor.

It carries out the reaction 5-O-(1-carboxyvinyl)-3-phosphoshikimate = chorismate + phosphate. The protein operates within metabolic intermediate biosynthesis; chorismate biosynthesis; chorismate from D-erythrose 4-phosphate and phosphoenolpyruvate: step 7/7. In terms of biological role, catalyzes the anti-1,4-elimination of the C-3 phosphate and the C-6 proR hydrogen from 5-enolpyruvylshikimate-3-phosphate (EPSP) to yield chorismate, which is the branch point compound that serves as the starting substrate for the three terminal pathways of aromatic amino acid biosynthesis. This reaction introduces a second double bond into the aromatic ring system. This is Chorismate synthase from Pseudomonas putida (strain ATCC 700007 / DSM 6899 / JCM 31910 / BCRC 17059 / LMG 24140 / F1).